We begin with the raw amino-acid sequence, 161 residues long: Alpha-crystallin A chain (161 aa).

Met1 bears the N-acetylmethionine mark. A required for complex formation with BFSP1 and BFSP2 region spans residues 1-53; the sequence is MDVTIQHPWFKRALGPFYHNRLFDQFFGEGLFEYDLLPFQSLFRTVLDSGISE. Deamidated glutamine; partial is present on residues Gln6 and Gln40. The sHSP domain maps to 41–150; sequence SLFRTVLDSG…SHSERAIPVS (110 aa). Residue Lys87 is modified to N6-acetyllysine. His88 is a binding site for Zn(2+). Position 89 is a deamidated asparagine; partial (Asn89). The Zn(2+) site is built by Glu90 and His95. Ser110 carries the phosphoserine modification. Asn111 bears the Deamidated asparagine; partial mark. Cys119 and Cys130 are joined by a disulfide. At Gln135 the chain carries Deamidated glutamine; partial. The segment at 135-161 is disordered; that stretch reads QSGMDASHSERAIPVSREEKASSAPNS. Basic and acidic residues predominate over residues 141–155; that stretch reads SHSERAIPVSREEKA. His142 is a binding site for Zn(2+). O-linked (GlcNAc) serine glycosylation is present at Ser150.

It belongs to the small heat shock protein (HSP20) family. In terms of assembly, heteromer composed of three CRYAA and one CRYAB subunits. Inter-subunit bridging via zinc ions enhances stability, which is crucial as there is no protein turn over in the lens. Can also form homodimers and homotetramers (dimers of dimers) which serve as the building blocks of homooligomers. Within homooligomers, the zinc-binding motif is created from residues of 3 different molecules. His-88 and Glu-90 from one molecule are ligands of the zinc ion, and His-95 and His-142 residues from additional molecules complete the site with tetrahedral coordination geometry. Part of a complex required for lens intermediate filament formation composed of BFSP1, BFSP2 and CRYAA. Undergoes age-dependent proteolytical cleavage at the C-terminus.

It localises to the cytoplasm. The protein resides in the nucleus. Contributes to the transparency and refractive index of the lens. In its oxidized form (absence of intramolecular disulfide bond), acts as a chaperone, preventing aggregation of various proteins under a wide range of stress conditions. Required for the correct formation of lens intermediate filaments as part of a complex composed of BFSP1, BFSP2 and CRYAA. This chain is Alpha-crystallin A chain (CRYAA), found in Trichechus inunguis (Amazon manatee).